We begin with the raw amino-acid sequence, 260 residues long: Adenosylcobinamide-GDP ribazoletransferase (260 aa).

The next 6 helical transmembrane spans lie at Ala-40 to Tyr-60, Leu-64 to Leu-84, Phe-117 to Ile-137, Gly-192 to Ile-212, Ala-214 to Gly-234, and Thr-240 to Leu-260.

Belongs to the CobS family. The cofactor is Mg(2+).

The protein resides in the cell inner membrane. The enzyme catalyses alpha-ribazole + adenosylcob(III)inamide-GDP = adenosylcob(III)alamin + GMP + H(+). It catalyses the reaction alpha-ribazole 5'-phosphate + adenosylcob(III)inamide-GDP = adenosylcob(III)alamin 5'-phosphate + GMP + H(+). It functions in the pathway cofactor biosynthesis; adenosylcobalamin biosynthesis; adenosylcobalamin from cob(II)yrinate a,c-diamide: step 7/7. Its function is as follows. Joins adenosylcobinamide-GDP and alpha-ribazole to generate adenosylcobalamin (Ado-cobalamin). Also synthesizes adenosylcobalamin 5'-phosphate from adenosylcobinamide-GDP and alpha-ribazole 5'-phosphate. The protein is Adenosylcobinamide-GDP ribazoletransferase of Brucella anthropi (strain ATCC 49188 / DSM 6882 / CCUG 24695 / JCM 21032 / LMG 3331 / NBRC 15819 / NCTC 12168 / Alc 37) (Ochrobactrum anthropi).